An 869-amino-acid chain; its full sequence is AP-3 complex subunit delta (869 aa).

N-acetylserine is present on S2. HEAT repeat units follow at residues 33–70 (NFIS…LHGV), 107–142 (SVML…GTHD), 143–179 (LARD…KYHD), 180–216 (AVKV…KDPQ), 218–254 (CLPL…IEPR), 292–329 (AAVK…KHLW), and 330–366 (AVLE…EDNV). Residues 738–869 (ISQDSFNPKR…EQVIIPDFLL (132 aa)) are disordered. A compositionally biased stretch (polar residues) spans 769 to 780 (ITPQAKTNIQTA). A compositionally biased stretch (basic and acidic residues) spans 815-830 (QEKEESSRIENHQNSE). Residues 831–850 (KKKKKKKKKKGEGSSKHKSR) are compositionally biased toward basic residues.

Belongs to the adaptor complexes large subunit family. As to quaternary structure, adaptor protein complex 3 (AP-3) is a heterotetramer composed of two large adaptins (delta-type subunit and beta-type subunit), a medium adaptin (mu-type subunit) and a small adaptin (sigma-type subunit). Binds to EPSIN2.

The protein localises to the cytoplasm. Its subcellular location is the golgi apparatus membrane. Functionally, part of the AP-3 complex, an adaptor-related complex which seems to be clathrin-associated. The complex is associated with the Golgi region as well as more peripheral structures. It facilitates the budding of vesicles from the Golgi membrane and may be directly involved in trafficking to the vacuole. It also function in maintaining the identity of lytic vacuoles and in regulating the transition between storage and lytic vacuoles. The polypeptide is AP-3 complex subunit delta (DELTA-ADR) (Arabidopsis thaliana (Mouse-ear cress)).